The chain runs to 322 residues: Phosphatidylserine decarboxylase proenzyme (322 aa).

Active-site charge relay system; for autoendoproteolytic cleavage activity residues include aspartate 90, histidine 147, and serine 254. Serine 254 (schiff-base intermediate with substrate; via pyruvic acid; for decarboxylase activity) is an active-site residue. The residue at position 254 (serine 254) is a Pyruvic acid (Ser); by autocatalysis. Positions 292–322 (TPDAEPSPLPAEEIEAEHDASPLVDDKKDQV) are disordered. The segment covering 308–322 (EHDASPLVDDKKDQV) has biased composition (basic and acidic residues).

Belongs to the phosphatidylserine decarboxylase family. PSD-B subfamily. Prokaryotic type I sub-subfamily. Heterodimer of a large membrane-associated beta subunit and a small pyruvoyl-containing alpha subunit. Requires pyruvate as cofactor. Is synthesized initially as an inactive proenzyme. Formation of the active enzyme involves a self-maturation process in which the active site pyruvoyl group is generated from an internal serine residue via an autocatalytic post-translational modification. Two non-identical subunits are generated from the proenzyme in this reaction, and the pyruvate is formed at the N-terminus of the alpha chain, which is derived from the carboxyl end of the proenzyme. The autoendoproteolytic cleavage occurs by a canonical serine protease mechanism, in which the side chain hydroxyl group of the serine supplies its oxygen atom to form the C-terminus of the beta chain, while the remainder of the serine residue undergoes an oxidative deamination to produce ammonia and the pyruvoyl prosthetic group on the alpha chain. During this reaction, the Ser that is part of the protease active site of the proenzyme becomes the pyruvoyl prosthetic group, which constitutes an essential element of the active site of the mature decarboxylase.

It is found in the cell membrane. The catalysed reaction is a 1,2-diacyl-sn-glycero-3-phospho-L-serine + H(+) = a 1,2-diacyl-sn-glycero-3-phosphoethanolamine + CO2. Its pathway is phospholipid metabolism; phosphatidylethanolamine biosynthesis; phosphatidylethanolamine from CDP-diacylglycerol: step 2/2. Its function is as follows. Catalyzes the formation of phosphatidylethanolamine (PtdEtn) from phosphatidylserine (PtdSer). This chain is Phosphatidylserine decarboxylase proenzyme, found in Escherichia coli O7:K1 (strain IAI39 / ExPEC).